The primary structure comprises 183 residues: CKLF-like MARVEL transmembrane domain-containing protein 6 (183 aa).

Residue Met1 is modified to N-acetylmethionine. The Cytoplasmic segment spans residues 1–39; sequence MENGAVYSPTTEEDPGPARGPRSGLAAYFFMGRLPLLRR. Ser8 bears the Phosphoserine mark. The region spanning 33–160 is the MARVEL domain; that stretch reads RLPLLRRVLK…DFITMLYEKR (128 aa). Residues 40–60 form a helical membrane-spanning segment; it reads VLKGLQLLLSLLAFICEEVVS. Residues 61 to 67 are Extracellular-facing; that stretch reads QCTLCGG. Residues 68-88 form a helical membrane-spanning segment; it reads LYFFEFVSCSAFLLSLLILIV. Topologically, residues 89-106 are cytoplasmic; that stretch reads YCTPFYERVDTTKVKSSD. The chain crosses the membrane as a helical span at residues 107–127; it reads FYITLGTGCVFLLASIIFVST. Residues 128–134 are Extracellular-facing; sequence HDRTSAE. A helical membrane pass occupies residues 135–155; it reads IAAIVFGFIASFMFLLDFITM. Over 156–183 the chain is Cytoplasmic; the sequence is LYEKRQESQLRKPENTTRAEALTEPLNA. At Thr171 the chain carries Phosphothreonine.

It belongs to the chemokine-like factor family. Interacts with PD-L1/CD274 (via transmembrane domain); the interaction is direct. Interacts with CMTM4. Interacts with CD58, ARG1, ENO1 and TMPO. As to expression, expressed in the leukocytes, placenta and testis.

It is found in the cell membrane. Its subcellular location is the early endosome membrane. The protein resides in the recycling endosome membrane. Functionally, master regulator of recycling and plasma membrane expression of PD-L1/CD274, an immune inhibitory ligand critical for immune tolerance to self and antitumor immunity. Associates with both constitutive and IFNG-induced PD-L1/CD274 at recycling endosomes, where it protects PD-L1/CD274 from being targeted for lysosomal degradation, likely by preventing its STUB1-mediated ubiquitination. May stabilize PD-L1/CD274 expression on antigen presenting cells and potentiates inhibitory signaling by PDCD1/CD279, its receptor on T-cells, ultimately triggering T-cell anergy. This is CKLF-like MARVEL transmembrane domain-containing protein 6 from Homo sapiens (Human).